The chain runs to 402 residues: Queuine tRNA-ribosyltransferase-like protein (402 aa).

The protein belongs to the queuine tRNA-ribosyltransferase family.

The chain is Queuine tRNA-ribosyltransferase-like protein from Theileria parva (East coast fever infection agent).